The chain runs to 212 residues: Protein FAM177A1 (212 aa).

Met1 is modified (N-acetylmethionine). The segment covering Met1 to Gly11 has biased composition (basic and acidic residues). The segment at Met1–Ser33 is disordered. A compositionally biased stretch (low complexity) spans Ala13–Ala29. Ser69 is modified (phosphoserine). Thr70 carries the phosphothreonine modification. Residues Ile135–Val172 adopt a coiled-coil conformation. Positions Glu146–Glu179 are disordered. Polar residues predominate over residues Gln161 to Glu179.

It belongs to the FAM177 family.

This is Protein FAM177A1 (FAM177A1) from Bos taurus (Bovine).